The following is a 366-amino-acid chain: UDP-GlcNAc:ribostamycin N-acetylglucosaminyltransferase (366 aa).

Residues 342-352 are compositionally biased toward low complexity; it reads AAGAGPAVPAG. Positions 342 to 366 are disordered; it reads AAGAGPAVPAGAGEGRGGREEEHGG. Basic and acidic residues predominate over residues 357–366; it reads RGGREEEHGG.

It belongs to the glycosyltransferase group 1 family. Glycosyltransferase 4 subfamily. A divalent metal cation serves as cofactor.

The catalysed reaction is ribostamycin + UDP-N-acetyl-alpha-D-glucosamine = 2'''-acetyl-6'''-hydroxyneomycin C + UDP + H(+). It participates in antibiotic biosynthesis; neomycin biosynthesis. Functionally, glycosyltransferase involved in the biosynthesis of neomycin by mediating glycosylation of ribostamycin with UDP-GlcNAc as a sugar donor to generate 2'''-acetyl-6'''-hydroxyneomycin C. The polypeptide is UDP-GlcNAc:ribostamycin N-acetylglucosaminyltransferase (neoK) (Streptomyces fradiae (Streptomyces roseoflavus)).